Consider the following 316-residue polypeptide: Pantothenate kinase (316 aa).

Residue 95 to 102 coordinates ATP; sequence GSVAVGKS.

This sequence belongs to the prokaryotic pantothenate kinase family.

The protein localises to the cytoplasm. The catalysed reaction is (R)-pantothenate + ATP = (R)-4'-phosphopantothenate + ADP + H(+). It participates in cofactor biosynthesis; coenzyme A biosynthesis; CoA from (R)-pantothenate: step 1/5. The chain is Pantothenate kinase from Shewanella woodyi (strain ATCC 51908 / MS32).